The following is a 365-amino-acid chain: Histidinol-phosphate aminotransferase (365 aa).

N6-(pyridoxal phosphate)lysine is present on Lys-222.

It belongs to the class-II pyridoxal-phosphate-dependent aminotransferase family. Histidinol-phosphate aminotransferase subfamily. As to quaternary structure, homodimer. The cofactor is pyridoxal 5'-phosphate.

The catalysed reaction is L-histidinol phosphate + 2-oxoglutarate = 3-(imidazol-4-yl)-2-oxopropyl phosphate + L-glutamate. It participates in amino-acid biosynthesis; L-histidine biosynthesis; L-histidine from 5-phospho-alpha-D-ribose 1-diphosphate: step 7/9. The chain is Histidinol-phosphate aminotransferase from Geobacillus sp. (strain WCH70).